A 354-amino-acid chain; its full sequence is Histone-lysine N-methyltransferase SUVR3 (354 aa).

In terms of domain architecture, Pre-SET spans 143–188; sequence SGCECERCEEGYCKCLAFAGMEEIANECGSGCGCGSDCSNRVTQKG. C145, C147, C150, C155, C157, C170, C174, C176, and C180 together coordinate Zn(2+). The 133-residue stretch at 191 to 323 folds into the SET domain; it reads VSLKIVRDEK…AEEELSFSYG (133 aa). S-adenosyl-L-methionine is bound by residues 201-203 and 281-282; these read KGW and NH. C284 contacts Zn(2+). Y322 provides a ligand contact to S-adenosyl-L-methionine. The Post-SET domain occupies 334-350; sequence DKLNCSCGSSCCLGTLP. Zn(2+) contacts are provided by C338, C340, and C345.

The protein belongs to the class V-like SAM-binding methyltransferase superfamily.

It is found in the nucleus. Its subcellular location is the chromosome. It carries out the reaction L-lysyl-[histone] + S-adenosyl-L-methionine = N(6)-methyl-L-lysyl-[histone] + S-adenosyl-L-homocysteine + H(+). Functionally, histone methyltransferase. This chain is Histone-lysine N-methyltransferase SUVR3 (SUVR3), found in Arabidopsis thaliana (Mouse-ear cress).